A 65-amino-acid polypeptide reads, in one-letter code: Cold shock-like protein CspB (65 aa).

The 60-residue stretch at Gly-3–Val-62 folds into the CSD domain.

In terms of assembly, homodimer.

It is found in the cytoplasm. In Bacillus cereus, this protein is Cold shock-like protein CspB (cspB).